The chain runs to 646 residues: Tyrosine-protein kinase MasK (646 aa).

Residues 1–415 are Periplasmic-facing; the sequence is MSPPQTTLPV…PTAGGRRWRT (415 aa). Residues 25 to 300 enclose the Protein kinase domain; it reads YVLVRKLAEG…AFADALETFL (276 aa). ATP-binding positions include 31–39 and K57; that span reads LAEGGMAEI. D163 functions as the Proton acceptor in the catalytic mechanism. The tract at residues 373–410 is disordered; that stretch reads TSAQRPGMSMRPSSPGVPAHGAASRGSTSPESAPTAGG. A helical membrane pass occupies residues 416-433; the sequence is LAVGLAGGLMLAAAGIVG. Residues 434–646 lie on the Cytoplasmic side of the membrane; it reads YRQWMTTPAS…VMPFSWRVTQ (213 aa). Residues 521 to 547 form a disordered region; that stretch reads AGAASDVEAEADEEGADAAPVRSKKAS. Residues 527 to 536 show a composition bias toward acidic residues; that stretch reads VEAEADEEGA.

Belongs to the protein kinase superfamily. Tyr protein kinase family. In terms of assembly, interacts with MglA. In terms of processing, autophosphorylated.

The protein resides in the cell inner membrane. It catalyses the reaction L-tyrosyl-[protein] + ATP = O-phospho-L-tyrosyl-[protein] + ADP + H(+). Essential for growth. Interacts with MglA to control social gliding motility. This Myxococcus xanthus (strain DK1622) protein is Tyrosine-protein kinase MasK (masK).